A 295-amino-acid polypeptide reads, in one-letter code: MEVIKITPRGYCHGVVGAIQLVRRVARDPNVPRPIYVLGQIVHNRHVVEEMEALGVITLDGEDRLSLLEKIDAGTVIFTAHGVSPAVKIRAREKGLYVVDATCPDVTRTHELIAELVSRGYEVIYIGKKGHPEPEGAVGVAPGHVHLVERAEDLEALSFAPGQKLAVTNQTTLSQWDTQALMEQVKARWPQTEIYNEICLATQQRQEAVARMAPEADLVIVVGDRRSNNSNRLVQVAQELAAREAHLVDSVEEIDPAWLKGKRKVAVTSGASTPTHITRAVIEFLEKYNVEVEER.

[4Fe-4S] cluster is bound at residue Cys-12. (2E)-4-hydroxy-3-methylbut-2-enyl diphosphate contacts are provided by His-43 and His-81. The dimethylallyl diphosphate site is built by His-43 and His-81. 2 residues coordinate isopentenyl diphosphate: His-43 and His-81. Cys-103 serves as a coordination point for [4Fe-4S] cluster. Residue His-131 coordinates (2E)-4-hydroxy-3-methylbut-2-enyl diphosphate. His-131 contributes to the dimethylallyl diphosphate binding site. His-131 serves as a coordination point for isopentenyl diphosphate. Glu-133 (proton donor) is an active-site residue. A (2E)-4-hydroxy-3-methylbut-2-enyl diphosphate-binding site is contributed by Thr-171. Cys-199 is a binding site for [4Fe-4S] cluster. Residues Ser-227, Asn-229, and Ser-272 each coordinate (2E)-4-hydroxy-3-methylbut-2-enyl diphosphate. Dimethylallyl diphosphate is bound by residues Ser-227, Asn-229, and Ser-272. Residues Ser-227, Asn-229, and Ser-272 each contribute to the isopentenyl diphosphate site.

This sequence belongs to the IspH family. It depends on [4Fe-4S] cluster as a cofactor.

The enzyme catalyses isopentenyl diphosphate + 2 oxidized [2Fe-2S]-[ferredoxin] + H2O = (2E)-4-hydroxy-3-methylbut-2-enyl diphosphate + 2 reduced [2Fe-2S]-[ferredoxin] + 2 H(+). It carries out the reaction dimethylallyl diphosphate + 2 oxidized [2Fe-2S]-[ferredoxin] + H2O = (2E)-4-hydroxy-3-methylbut-2-enyl diphosphate + 2 reduced [2Fe-2S]-[ferredoxin] + 2 H(+). Its pathway is isoprenoid biosynthesis; dimethylallyl diphosphate biosynthesis; dimethylallyl diphosphate from (2E)-4-hydroxy-3-methylbutenyl diphosphate: step 1/1. It participates in isoprenoid biosynthesis; isopentenyl diphosphate biosynthesis via DXP pathway; isopentenyl diphosphate from 1-deoxy-D-xylulose 5-phosphate: step 6/6. In terms of biological role, catalyzes the conversion of 1-hydroxy-2-methyl-2-(E)-butenyl 4-diphosphate (HMBPP) into a mixture of isopentenyl diphosphate (IPP) and dimethylallyl diphosphate (DMAPP). Acts in the terminal step of the DOXP/MEP pathway for isoprenoid precursor biosynthesis. The chain is 4-hydroxy-3-methylbut-2-enyl diphosphate reductase from Symbiobacterium thermophilum (strain DSM 24528 / JCM 14929 / IAM 14863 / T).